Reading from the N-terminus, the 384-residue chain is uncharacterized protein (384 aa).

12 consecutive transmembrane segments (helical) span residues 22 to 42, 52 to 72, 81 to 101, 106 to 126, 143 to 163, 164 to 184, 202 to 222, 240 to 260, 276 to 296, 299 to 319, 327 to 347, and 352 to 372; these read LAFFIAGLGMAAWAPLVPFAK, LGLLLLCIGIGSMLAMPLTGV, AVILLAGAVLCLDLPLLVLMN, MAIALLVFGAAMGIIDVAMNI, FHGLFSVGGIVGAGGVSALLW, LGLNPLTAIMATVVLMIILLL, LFVFPRGWVMFIGFLCFVMFL, GMSPSQAGMGYAVFAIAMTLG, VLLGGSLCSAIGIIIAISIDS, AAIIGFMLVGFGASNVVPILF, VMPANLAVASITTIGYAGILA, and IGFIAQLSSLSVAFGCVALLL.

The protein belongs to the major facilitator superfamily.

Its subcellular location is the membrane. This is an uncharacterized protein from Yersinia pestis.